A 53-amino-acid chain; its full sequence is MPITLDPEKLAIVMKHRFQYKICRECGAKNPPDAVKCRRCRSRNLRPKRFRKK.

The protein belongs to the eukaryotic ribosomal protein eL40 family.

This Pyrobaculum aerophilum (strain ATCC 51768 / DSM 7523 / JCM 9630 / CIP 104966 / NBRC 100827 / IM2) protein is Large ribosomal subunit protein eL40.